Consider the following 402-residue polypeptide: Mannonate dehydratase 1 (402 aa).

Belongs to the mannonate dehydratase family. Fe(2+) serves as cofactor. Mn(2+) is required as a cofactor.

The enzyme catalyses D-mannonate = 2-dehydro-3-deoxy-D-gluconate + H2O. It functions in the pathway carbohydrate metabolism; pentose and glucuronate interconversion. Functionally, catalyzes the dehydration of D-mannonate. This chain is Mannonate dehydratase 1 (uxuA1), found in Agrobacterium fabrum (strain C58 / ATCC 33970) (Agrobacterium tumefaciens (strain C58)).